Reading from the N-terminus, the 88-residue chain is Small ribosomal subunit protein uS17 (88 aa).

Belongs to the universal ribosomal protein uS17 family. Part of the 30S ribosomal subunit.

In terms of biological role, one of the primary rRNA binding proteins, it binds specifically to the 5'-end of 16S ribosomal RNA. The chain is Small ribosomal subunit protein uS17 from Pseudomonas savastanoi pv. phaseolicola (strain 1448A / Race 6) (Pseudomonas syringae pv. phaseolicola (strain 1448A / Race 6)).